A 120-amino-acid chain; its full sequence is 2-amino-4-hydroxy-6-hydroxymethyldihydropteridine pyrophosphokinase (120 aa).

It belongs to the HPPK family.

It carries out the reaction 6-hydroxymethyl-7,8-dihydropterin + ATP = (7,8-dihydropterin-6-yl)methyl diphosphate + AMP + H(+). Its pathway is cofactor biosynthesis; tetrahydrofolate biosynthesis; 2-amino-4-hydroxy-6-hydroxymethyl-7,8-dihydropteridine diphosphate from 7,8-dihydroneopterin triphosphate: step 4/4. Its function is as follows. Catalyzes the transfer of pyrophosphate from adenosine triphosphate (ATP) to 6-hydroxymethyl-7,8-dihydropterin, an enzymatic step in folate biosynthesis pathway. The protein is 2-amino-4-hydroxy-6-hydroxymethyldihydropteridine pyrophosphokinase (folK) of Pseudomonas putida (Arthrobacter siderocapsulatus).